Reading from the N-terminus, the 695-residue chain is Threonine--tRNA ligase 1, cytoplasmic (695 aa).

The disordered stretch occupies residues Met-1 to Pro-21. One can recognise a TGS domain in the interval Asp-51–Lys-115. Lys-215 bears the N6-acetyllysine mark. Position 218 is a phosphothreonine (Thr-218). At Tyr-270 the chain carries Phosphotyrosine. Thr-425 is subject to Phosphothreonine.

The protein belongs to the class-II aminoacyl-tRNA synthetase family. Homodimer. ISGylated.

It localises to the cytoplasm. It carries out the reaction tRNA(Thr) + L-threonine + ATP = L-threonyl-tRNA(Thr) + AMP + diphosphate + H(+). Catalyzes the attachment of threonine to tRNA(Thr) in a two-step reaction: threonine is first activated by ATP to form Thr-AMP and then transferred to the acceptor end of tRNA(Thr). Also edits incorrectly charged tRNA(Thr) via its editing domain, at the post-transfer stage. This chain is Threonine--tRNA ligase 1, cytoplasmic (Tars1), found in Rattus norvegicus (Rat).